The following is a 217-amino-acid chain: Vesicle-associated membrane protein 723 (217 aa).

The Cytoplasmic segment spans residues 1-192; the sequence is MAQQSLFYSF…KWFQNMKIKL (192 aa). One can recognise a Longin domain in the interval 10-114; sequence FIARGTVILV…SLNKEFGSNL (105 aa). Residues 130–186 form the v-SNARE coiled-coil homology domain; that stretch reads NLAKAKAQVSEVKSLMMENIEKVLARGVICEMLGSSESQPQAFYIKRTQMKRKKWFQ. The helical; Anchor for type IV membrane protein transmembrane segment at 193–213 threads the bilayer; sequence IVLAIIIALILIIILSVCGGF. Residues 214–217 are Vesicular-facing; that stretch reads NCGK.

Belongs to the synaptobrevin family. In terms of tissue distribution, highly expressed in stems and roots. Detected in flowers and leaves.

The protein localises to the endoplasmic reticulum membrane. Its function is as follows. Involved in the targeting and/or fusion of transport vesicles to their target membrane. The chain is Vesicle-associated membrane protein 723 from Arabidopsis thaliana (Mouse-ear cress).